A 274-amino-acid polypeptide reads, in one-letter code: Dehydration-responsive element-binding protein 2A (274 aa).

Composition is skewed to basic and acidic residues over residues 1 to 10 (MERGEGRRGD) and 35 to 50 (KWWK…ENSS). Positions 1–75 (MERGEGRRGD…KGGPENSNCA (75 aa)) are disordered. Positions 75–132 (AYRGVRQRTWGKWVAEIREPNRGRRLWLGSFPTALEAAHAYDEAARAMYGPTARVNFA) form a DNA-binding region, AP2/ERF.

It belongs to the AP2/ERF transcription factor family. ERF subfamily.

It localises to the nucleus. Functionally, transcriptional activator that binds specifically to the DNA sequence 5'-[AG]CCGAC-3'. Binding to the C-repeat/DRE element mediates high salinity- and dehydration-inducible transcription. The polypeptide is Dehydration-responsive element-binding protein 2A (DREB2A) (Oryza sativa subsp. indica (Rice)).